A 937-amino-acid chain; its full sequence is Molybdenum cofactor sulfurase (937 aa).

K237 is subject to N6-(pyridoxal phosphate)lysine. C397 is a catalytic residue. 3 disordered regions span residues 633 to 710, 756 to 795, and 897 to 921; these read GQGK…RRIL, PSPS…KLNP, and KEGT…GGNG. Residues 638-652 are compositionally biased toward basic residues; sequence MTRHAKAHLQRHQHQ. Positions 682–935 constitute an MOSC domain; it reads TPPSPPDSDT…VRVGDVVRPS (254 aa). Residues 756-767 are compositionally biased toward low complexity; that stretch reads PSPSTPSASPSN. The span at 900-921 shows a compositional bias: gly residues; sequence TGMGMGTGTGTGTGTRSMGGNG.

It belongs to the class-V pyridoxal-phosphate-dependent aminotransferase family. MOCOS subfamily. Pyridoxal 5'-phosphate is required as a cofactor.

The enzyme catalyses Mo-molybdopterin + L-cysteine + AH2 = thio-Mo-molybdopterin + L-alanine + A + H2O. It functions in the pathway cofactor biosynthesis; molybdopterin biosynthesis. Its function is as follows. Sulfurates the molybdenum cofactor. Sulfation of molybdenum is essential for xanthine dehydrogenase (XDH) and aldehyde oxidase (ADO) enzymes in which molybdenum cofactor is liganded by 1 oxygen and 1 sulfur atom in active form. The polypeptide is Molybdenum cofactor sulfurase (nit-13) (Neurospora crassa (strain ATCC 24698 / 74-OR23-1A / CBS 708.71 / DSM 1257 / FGSC 987)).